A 273-amino-acid polypeptide reads, in one-letter code: Hydroxyethylthiazole kinase (273 aa).

Met-47 lines the substrate pocket. ATP is bound by residues Arg-123 and Thr-169. Residue Gly-196 coordinates substrate.

It belongs to the Thz kinase family. It depends on Mg(2+) as a cofactor.

It carries out the reaction 5-(2-hydroxyethyl)-4-methylthiazole + ATP = 4-methyl-5-(2-phosphooxyethyl)-thiazole + ADP + H(+). The protein operates within cofactor biosynthesis; thiamine diphosphate biosynthesis; 4-methyl-5-(2-phosphoethyl)-thiazole from 5-(2-hydroxyethyl)-4-methylthiazole: step 1/1. In terms of biological role, catalyzes the phosphorylation of the hydroxyl group of 4-methyl-5-beta-hydroxyethylthiazole (THZ). This is Hydroxyethylthiazole kinase from Desulfotalea psychrophila (strain LSv54 / DSM 12343).